The following is a 112-amino-acid chain: uncharacterized protein (112 aa).

The first 25 residues, 1–25 (MKGTKLAVVVGMTVAAVSLAAPAQA), serve as a signal peptide directing secretion.

This is an uncharacterized protein from Mycobacterium tuberculosis (strain CDC 1551 / Oshkosh).